The sequence spans 265 residues: Tryptophan synthase alpha chain (265 aa).

Catalysis depends on proton acceptor residues Glu-49 and Asp-60.

This sequence belongs to the TrpA family. As to quaternary structure, tetramer of two alpha and two beta chains.

It carries out the reaction (1S,2R)-1-C-(indol-3-yl)glycerol 3-phosphate + L-serine = D-glyceraldehyde 3-phosphate + L-tryptophan + H2O. It functions in the pathway amino-acid biosynthesis; L-tryptophan biosynthesis; L-tryptophan from chorismate: step 5/5. In terms of biological role, the alpha subunit is responsible for the aldol cleavage of indoleglycerol phosphate to indole and glyceraldehyde 3-phosphate. The sequence is that of Tryptophan synthase alpha chain from Polynucleobacter necessarius subsp. necessarius (strain STIR1).